Reading from the N-terminus, the 213-residue chain is Probable nicotinate-nucleotide adenylyltransferase (213 aa).

The segment at 194-213 (RKPNNGEAKDGDVKDEEAVR) is disordered. Residues 200–213 (EAKDGDVKDEEAVR) are compositionally biased toward basic and acidic residues.

This sequence belongs to the NadD family.

It catalyses the reaction nicotinate beta-D-ribonucleotide + ATP + H(+) = deamido-NAD(+) + diphosphate. Its pathway is cofactor biosynthesis; NAD(+) biosynthesis; deamido-NAD(+) from nicotinate D-ribonucleotide: step 1/1. In terms of biological role, catalyzes the reversible adenylation of nicotinate mononucleotide (NaMN) to nicotinic acid adenine dinucleotide (NaAD). This Mycolicibacterium smegmatis (strain ATCC 700084 / mc(2)155) (Mycobacterium smegmatis) protein is Probable nicotinate-nucleotide adenylyltransferase.